Consider the following 197-residue polypeptide: Putative peptidyl-prolyl cis-trans isomerase (197 aa).

The region spanning 14-195 is the PPIase cyclophilin-type domain; sequence GEIKVVMHTN…HDVVIESIDV (182 aa).

This sequence belongs to the cyclophilin-type PPIase family.

The enzyme catalyses [protein]-peptidylproline (omega=180) = [protein]-peptidylproline (omega=0). Functionally, PPIases accelerate the folding of proteins. It catalyzes the cis-trans isomerization of proline imidic peptide bonds in oligopeptides. In Staphylococcus aureus (strain bovine RF122 / ET3-1), this protein is Putative peptidyl-prolyl cis-trans isomerase.